An 862-amino-acid polypeptide reads, in one-letter code: Protein translocase subunit SecA (862 aa).

Residues Q88, 106–110, and D506 each bind ATP; that span reads GEGKT. Zn(2+)-binding residues include C839, C841, C850, and H851.

The protein belongs to the SecA family. As to quaternary structure, monomer and homodimer. Part of the essential Sec protein translocation apparatus which comprises SecA, SecYEG and auxiliary proteins SecDF-YajC and YidC. Zn(2+) is required as a cofactor.

Its subcellular location is the cell inner membrane. The protein resides in the cytoplasm. The catalysed reaction is ATP + H2O + cellular proteinSide 1 = ADP + phosphate + cellular proteinSide 2.. Its function is as follows. Part of the Sec protein translocase complex. Interacts with the SecYEG preprotein conducting channel. Has a central role in coupling the hydrolysis of ATP to the transfer of proteins into and across the cell membrane, serving as an ATP-driven molecular motor driving the stepwise translocation of polypeptide chains across the membrane. The polypeptide is Protein translocase subunit SecA (Campylobacter jejuni (strain RM1221)).